The sequence spans 62 residues: Potassium channel toxin alpha-KTx 6.21 (62 aa).

An N-terminal signal peptide occupies residues 1 to 24 (MNAKLIYLLLVVTTMMLTFDTTQA). 4 disulfides stabilise this stretch: cysteine 29–cysteine 50, cysteine 35–cysteine 55, cysteine 39–cysteine 57, and cysteine 45–cysteine 60. Valine 61 carries the post-translational modification Valine amide.

It belongs to the short scorpion toxin superfamily. Potassium channel inhibitor family. Alpha-KTx 06 subfamily. C-terminal amidation is important for activity. There is a 50-70-fold decrease in ability to inhibit Kv1.2/KCNA2 when the toxin is not amidated. This decrease may be explained by a 23-fold slower association rate (k(on)) together with a 2-fold faster dissociation rate (k(off)). Expressed by the venom gland.

The protein resides in the secreted. Reversible blocker of voltage-gated potassium channels with fast binding and unbinding kinetics. Has highest activity on human voltage-gated potassium channel Kv1.2/KCNA2 channels (IC(50)=0.11-0.16 nM), whereas its affinity for other channels tested was in the nanomolar range (hKv1.1/KCNA1, IC(50)=253 nM; hKv1.3/KCNA3, IC(50)=91 nM; and hKCa3.1/KCNN4, IC(50)=70 nM). In Urodacus yaschenkoi (Inland robust scorpion), this protein is Potassium channel toxin alpha-KTx 6.21.